The primary structure comprises 119 residues: Large ribosomal subunit protein bL19 (119 aa).

This sequence belongs to the bacterial ribosomal protein bL19 family.

This protein is located at the 30S-50S ribosomal subunit interface and may play a role in the structure and function of the aminoacyl-tRNA binding site. In Pseudarthrobacter chlorophenolicus (strain ATCC 700700 / DSM 12829 / CIP 107037 / JCM 12360 / KCTC 9906 / NCIMB 13794 / A6) (Arthrobacter chlorophenolicus), this protein is Large ribosomal subunit protein bL19.